Reading from the N-terminus, the 211-residue chain is MSRVATTAALNLAKSLRDAGIRDEAVLQAVANTPRELFLDAALGHKAYENTALPIGMGQTISQPYIVARMTELLLEHKPKKVLEIGTGSGYQAAILAQLSPELCTVERIKSLQIQARQRLKRLDLHNISFKYGDGWKGWPNKGPFDAIMVTAAAATVPEALLGQLVDNGVLIIPVGDTSQQLLKVVRHGEQFSSEVVEIVRFVPLVNGELA.

The active site involves serine 62.

This sequence belongs to the methyltransferase superfamily. L-isoaspartyl/D-aspartyl protein methyltransferase family.

It localises to the cytoplasm. It carries out the reaction [protein]-L-isoaspartate + S-adenosyl-L-methionine = [protein]-L-isoaspartate alpha-methyl ester + S-adenosyl-L-homocysteine. In terms of biological role, catalyzes the methyl esterification of L-isoaspartyl residues in peptides and proteins that result from spontaneous decomposition of normal L-aspartyl and L-asparaginyl residues. It plays a role in the repair and/or degradation of damaged proteins. This is Protein-L-isoaspartate O-methyltransferase from Shewanella woodyi (strain ATCC 51908 / MS32).